The following is a 270-amino-acid chain: 2-epi-5-epi-valiolone 7-phosphate 2-epimerase (270 aa).

Residues Glu143 and Glu236 each act as proton donor/acceptor in the active site.

Belongs to the hyi family.

The catalysed reaction is 2-epi-5-epi-valiolone 7-phosphate = 5-epi-valiolone 7-phosphate. Functionally, involved in the biosynthesis of the alpha-glucosidase inhibitor acarbose. Catalyzes the 2-epimerisation of 2-epi-5-epivaliolone 7-phosphate to yield 5-epi-valiolone 7-phosphate. This chain is 2-epi-5-epi-valiolone 7-phosphate 2-epimerase (acbO), found in Actinoplanes sp. (strain ATCC 31044 / CBS 674.73 / SE50/110).